We begin with the raw amino-acid sequence, 321 residues long: L-lactate dehydrogenase (321 aa).

Residues valine 19, aspartate 40, lysine 45, tyrosine 71, and 85–86 (GA) each bind NAD(+). Residues glutamine 88, arginine 94, and 126-129 (NPVD) each bind substrate. NAD(+) contacts are provided by residues 124–126 (ATN) and serine 149. 154–157 (DTAR) contributes to the substrate binding site. Residues arginine 159 and histidine 174 each coordinate beta-D-fructose 1,6-bisphosphate. Residue histidine 181 is the Proton acceptor of the active site. A Phosphotyrosine modification is found at tyrosine 226. Threonine 235 serves as a coordination point for substrate.

It belongs to the LDH/MDH superfamily. LDH family. As to quaternary structure, homotetramer.

It is found in the cytoplasm. It catalyses the reaction (S)-lactate + NAD(+) = pyruvate + NADH + H(+). The protein operates within fermentation; pyruvate fermentation to lactate; (S)-lactate from pyruvate: step 1/1. Its activity is regulated as follows. Allosterically activated by fructose 1,6-bisphosphate (FBP). Functionally, catalyzes the conversion of lactate to pyruvate. This chain is L-lactate dehydrogenase, found in Oceanobacillus iheyensis (strain DSM 14371 / CIP 107618 / JCM 11309 / KCTC 3954 / HTE831).